Consider the following 307-residue polypeptide: Nicotinamide/nicotinic acid mononucleotide adenylyltransferase 2 (307 aa).

Positions 16 and 17 each coordinate NAD(+). His24 lines the ATP pocket. Residues Trp92 and Thr95 each coordinate NAD(+). Residues Cys164 and Cys165 are each lipidated (S-palmitoyl cysteine). Residues Gly200, Asp202, Leu212, Trp213, and Arg232 each coordinate NAD(+). Position 271 to 274 (271 to 274 (TKSR)) interacts with ATP.

The protein belongs to the eukaryotic NMN adenylyltransferase family. Monomer. Mg(2+) serves as cofactor. Degraded in response to injured neurite. Degradation is caused by polyubiquitination by MYCBP2 after recognition by FBXO45. In terms of processing, palmitoylated; palmitoylation is required for membrane association.

The protein resides in the golgi apparatus membrane. It is found in the cytoplasmic vesicle membrane. The protein localises to the cytoplasm. It localises to the cell projection. Its subcellular location is the axon. The enzyme catalyses beta-nicotinamide D-ribonucleotide + ATP + H(+) = diphosphate + NAD(+). It catalyses the reaction nicotinate beta-D-ribonucleotide + ATP + H(+) = deamido-NAD(+) + diphosphate. The protein operates within cofactor biosynthesis; NAD(+) biosynthesis; NAD(+) from nicotinamide D-ribonucleotide: step 1/1. It functions in the pathway cofactor biosynthesis; NAD(+) biosynthesis; deamido-NAD(+) from nicotinate D-ribonucleotide: step 1/1. Inhibited by P1-(adenosine-5')-P3-(nicotinamide-riboside-5')-triphosphate (Np3AD) and P1-(adenosine-5')-P4-(nicotinamide-riboside-5')-tetraphosphate (Np4AD). Functionally, nicotinamide/nicotinate-nucleotide adenylyltransferase that acts as an axon maintenance factor. Axon survival factor required for the maintenance of healthy axons: acts by delaying Wallerian axon degeneration, an evolutionarily conserved process that drives the loss of damaged axons. Catalyzes the formation of NAD(+) from nicotinamide mononucleotide (NMN) and ATP. Can also use the deamidated form; nicotinic acid mononucleotide (NaMN) as substrate but with a lower efficiency. Cannot use triazofurin monophosphate (TrMP) as substrate. Also catalyzes the reverse reaction, i.e. the pyrophosphorolytic cleavage of NAD(+). For the pyrophosphorolytic activity prefers NAD(+), NADH and NaAD as substrates and degrades nicotinic acid adenine dinucleotide phosphate (NHD) less effectively. Fails to cleave phosphorylated dinucleotides NADP(+), NADPH and NaADP(+). Also acts as an activator of ADP-ribosylation by supporting the catalytic activity of PARP16 and promoting mono-ADP-ribosylation of ribosomes by PARP16. May be involved in the maintenance of axonal integrity. The protein is Nicotinamide/nicotinic acid mononucleotide adenylyltransferase 2 (NMNAT2) of Pongo abelii (Sumatran orangutan).